We begin with the raw amino-acid sequence, 633 residues long: RpoH suppressor (633 aa).

Residues 11 to 410 (LVMKGGITSG…SSNFPIHLFD (400 aa)) form the PNPLA domain. Transmembrane regions (helical) follow at residues 38 to 58 (NIGG…AAVG), 133 to 153 (IAPV…YAVG), and 159 to 179 (IAAA…FAVL). Positions 41–45 (GTSAG) match the GXSXG motif. S43 functions as the Nucleophile in the catalytic mechanism. Residues 342–380 (ARRESLPGSDGENEAEDTTSDEDEQKTVLDSTEALTTGG) form a disordered region. The segment covering 352–365 (GENEAEDTTSDEDE) has biased composition (acidic residues). D397 acts as the Proton acceptor in catalysis. The short motif at 397 to 399 (DGG) is the DGA/G element. The segment at 605 to 624 (EGEKWSGEGPDLTKTAPRPL) is disordered.

It is found in the cell membrane. This protein is non-essential for R.meliloti growth, but induces a heat-shock response in temperature-sensitive E.coli K165 by elevating levels of sigma 32 (mechanism unknown). In Rhizobium meliloti (strain 1021) (Ensifer meliloti), this protein is RpoH suppressor (suhR).